The primary structure comprises 545 residues: Chaperonin GroEL (545 aa).

ATP-binding positions include 30–33, lysine 51, 87–91, glycine 415, and aspartate 495; these read TLGP and DGTTT.

This sequence belongs to the chaperonin (HSP60) family. Forms a cylinder of 14 subunits composed of two heptameric rings stacked back-to-back. Interacts with the co-chaperonin GroES.

It is found in the cytoplasm. The catalysed reaction is ATP + H2O + a folded polypeptide = ADP + phosphate + an unfolded polypeptide.. Together with its co-chaperonin GroES, plays an essential role in assisting protein folding. The GroEL-GroES system forms a nano-cage that allows encapsulation of the non-native substrate proteins and provides a physical environment optimized to promote and accelerate protein folding. This Shewanella sp. (strain W3-18-1) protein is Chaperonin GroEL.